The primary structure comprises 279 residues: Topoisomerase I damage affected protein 4 (279 aa).

Residues 1–32 lie on the Extracellular side of the membrane; sequence MNANSTTTAIGLTSPFEKLSFFPHSSNLILAH. A helical membrane pass occupies residues 33–53; it reads LHEIIFSFVFYQLAFSVVAPF. Residues 54-79 lie on the Cytoplasmic side of the membrane; sequence LNKVVFRKHYTTIRDPLLKIDFNVHT. The TLC domain maps to 70–271; it reads LLKIDFNVHT…MIRIAKKLAK (202 aa). A helical transmembrane segment spans residues 80–100; that stretch reads VSMIQAVVSNTVLLPTLTTPM. Over 101-110 the chain is Extracellular; sequence HYNVVTYTDS. Residues 111–131 form a helical membrane-spanning segment; sequence YSSMVSSLSAGYFIWDLTMCV. Residues 132–135 are Cytoplasmic-facing; the sequence is RYFK. The chain crosses the membrane as a helical span at residues 136–156; sequence LYGLEFTGHAIGSVYVMLLSL. The Extracellular portion of the chain corresponds to 157-162; sequence RPFCQP. Residues 163-183 form a helical membrane-spanning segment; sequence WIGRFLIYEASTPFVNINWFI. Topologically, residues 184–192 are cytoplasmic; the sequence is MQCNAKSKN. Residues 193-213 form a helical membrane-spanning segment; it reads SIPLWFNVVNGLLLMTVFFVV. Topologically, residues 214–238 are extracellular; sequence RICWGSIASALLFRQMWKVRDELPK. Residues 239–259 traverse the membrane as a helical segment; that stretch reads FSAVTMMSLNIFMNLLNVLWF. Residues 260–279 lie on the Cytoplasmic side of the membrane; sequence KKMIRIAKKLAKPAPTSKLD.

It belongs to the TMEM56 family.

It is found in the membrane. The polypeptide is Topoisomerase I damage affected protein 4 (TDA4) (Saccharomyces cerevisiae (strain ATCC 204508 / S288c) (Baker's yeast)).